The sequence spans 281 residues: Putrescine transport system permease protein PotI (281 aa).

At 1–13 (MNNLPVVRSPWRI) the chain is on the cytoplasmic side. A helical transmembrane segment spans residues 14–33 (VILLLGFTFLYAPMLMLVIY). The Periplasmic portion of the chain corresponds to 34–68 (SFNSSKLVTVWAGWSTRWYGELLRDDAMMSAVGLS). The ABC transmembrane type-1 domain maps to 65–260 (VGLSLTIAAC…GAVGIVGFIA (196 aa)). A helical transmembrane segment spans residues 69–88 (LTIAACAATAAAILGTIAAV). At 89–115 (VLVRFGRFRGSNGFAFMITAPLVMPDV) the chain is on the cytoplasmic side. A helical transmembrane segment spans residues 116-135 (ITGLSLLLLFVALAHAIGWP). Topologically, residues 136-140 (ADRGM) are periplasmic. A helical transmembrane segment spans residues 141-160 (LTIWLAHVTFCTAYVAVVIS). Topologically, residues 161–186 (SRLRELDRSIEEAAMDLGATPLKVFF) are cytoplasmic. A helical membrane pass occupies residues 187–206 (VITLPMIMPAIISGWLLAFT). Residues 207–243 (LSLDDLVIASFVSGPGATTLPMLVFSSVRMGVNPEIN) lie on the Periplasmic side of the membrane. A helical membrane pass occupies residues 244–263 (ALATLILGAVGIVGFIAWYL). At 264–281 (MARAEKQRIRDIQRARRG) the chain is on the cytoplasmic side.

Belongs to the binding-protein-dependent transport system permease family. CysTW subfamily. The complex is composed of two ATP-binding proteins (PotG), two transmembrane proteins (PotH and PotI) and a solute-binding protein (PotF).

It is found in the cell inner membrane. Part of the ABC transporter complex PotFGHI involved in putrescine uptake. Responsible for the translocation of the substrate across the membrane. The chain is Putrescine transport system permease protein PotI from Escherichia coli O6:H1 (strain CFT073 / ATCC 700928 / UPEC).